The sequence spans 433 residues: Glycoprotein U21 (433 aa).

At 1-364 the chain is on the lumenal side; sequence MMICLVFLCV…SAMLSFAEMT (364 aa). N-linked (GlcNAc...) asparagine; by host glycosylation occurs at Asn164. The helical transmembrane segment at 365–385 threads the bilayer; it reads SIILNLMFMGAVAVSVGILGI. Over 386 to 433 the chain is Cytoplasmic; sequence SCFVGLKEIIYFIFVSVDYMWPFCDTLLTTAVNCFFKGRTFLRRELKI.

Belongs to the herpesviruses U21 family.

It localises to the host endoplasmic reticulum membrane. The protein resides in the host lysosome membrane. Plays a role in escape from immune detection by associating with and diverting properly folded class I MHC molecules to an endolysosomal compartment, effectively removing them from the cell surface. In consequence, surface class I molecules are down-regulated and infected cells are masked for immune recognition by cytotoxic T lymphocytes. Also plays a role in the down-regulation of the host stress-induced NKG2D ligand UBPL3, which enables immune cells expressing the NKG2D receptor to recognize and annihilate infected cells prior to viral spread. The chain is Glycoprotein U21 (U21) from Homo sapiens (Human).